We begin with the raw amino-acid sequence, 324 residues long: Phospho-N-acetylmuramoyl-pentapeptide-transferase (324 aa).

10 helical membrane passes run Val-5 to Ile-25, Gly-50 to Met-70, Leu-77 to Leu-97, Leu-117 to Ser-137, Leu-147 to Ser-167, Leu-176 to Trp-196, Ile-203 to His-223, Val-227 to Leu-247, Leu-250 to Ile-270, and Val-304 to Ile-324.

It belongs to the glycosyltransferase 4 family. MraY subfamily. The cofactor is Mg(2+).

The protein localises to the cell membrane. It carries out the reaction UDP-N-acetyl-alpha-D-muramoyl-L-alanyl-gamma-D-glutamyl-meso-2,6-diaminopimeloyl-D-alanyl-D-alanine + di-trans,octa-cis-undecaprenyl phosphate = di-trans,octa-cis-undecaprenyl diphospho-N-acetyl-alpha-D-muramoyl-L-alanyl-D-glutamyl-meso-2,6-diaminopimeloyl-D-alanyl-D-alanine + UMP. The protein operates within cell wall biogenesis; peptidoglycan biosynthesis. In terms of biological role, catalyzes the initial step of the lipid cycle reactions in the biosynthesis of the cell wall peptidoglycan: transfers peptidoglycan precursor phospho-MurNAc-pentapeptide from UDP-MurNAc-pentapeptide onto the lipid carrier undecaprenyl phosphate, yielding undecaprenyl-pyrophosphoryl-MurNAc-pentapeptide, known as lipid I. This chain is Phospho-N-acetylmuramoyl-pentapeptide-transferase, found in Geobacillus sp. (strain WCH70).